The following is a 361-amino-acid chain: Tyrosine--tRNA ligase (361 aa).

Positions 36, 162, 166, 169, and 184 each coordinate L-tyrosine. Residues 236 to 240 (KMSKS) carry the 'KMSKS' region motif. K239 contacts ATP.

This sequence belongs to the class-I aminoacyl-tRNA synthetase family. TyrS type 4 subfamily. Homodimer.

Its subcellular location is the cytoplasm. It catalyses the reaction tRNA(Tyr) + L-tyrosine + ATP = L-tyrosyl-tRNA(Tyr) + AMP + diphosphate + H(+). In terms of biological role, catalyzes the attachment of tyrosine to tRNA(Tyr) in a two-step reaction: tyrosine is first activated by ATP to form Tyr-AMP and then transferred to the acceptor end of tRNA(Tyr). The polypeptide is Tyrosine--tRNA ligase (Saccharolobus islandicus (strain L.S.2.15 / Lassen #1) (Sulfolobus islandicus)).